Reading from the N-terminus, the 159-residue chain is SsrA-binding protein (159 aa).

Residues 140 to 150 (RATEKERDWNR) show a composition bias toward basic and acidic residues. The tract at residues 140–159 (RATEKERDWNRQKQRVLRQR) is disordered.

The protein belongs to the SmpB family.

The protein localises to the cytoplasm. Functionally, required for rescue of stalled ribosomes mediated by trans-translation. Binds to transfer-messenger RNA (tmRNA), required for stable association of tmRNA with ribosomes. tmRNA and SmpB together mimic tRNA shape, replacing the anticodon stem-loop with SmpB. tmRNA is encoded by the ssrA gene; the 2 termini fold to resemble tRNA(Ala) and it encodes a 'tag peptide', a short internal open reading frame. During trans-translation Ala-aminoacylated tmRNA acts like a tRNA, entering the A-site of stalled ribosomes, displacing the stalled mRNA. The ribosome then switches to translate the ORF on the tmRNA; the nascent peptide is terminated with the 'tag peptide' encoded by the tmRNA and targeted for degradation. The ribosome is freed to recommence translation, which seems to be the essential function of trans-translation. This chain is SsrA-binding protein, found in Alcanivorax borkumensis (strain ATCC 700651 / DSM 11573 / NCIMB 13689 / SK2).